Consider the following 1807-residue polypeptide: Nucleoporin nup189 (1807 aa).

The disordered stretch occupies residues methionine 1 to threonine 118. GLFG repeat units follow at residues glycine 26 to glycine 29 and glycine 66 to glycine 69. Residues glycine 29–serine 61 are compositionally biased toward polar residues. Positions asparagine 62–threonine 77 are enriched in low complexity. Residues glycine 78–methionine 90 are compositionally biased toward gly residues. The segment covering glutamine 93–proline 108 has biased composition (polar residues). GLFG repeat units lie at residues glycine 112–glycine 115, glycine 152–glycine 155, glycine 177–glycine 180, glycine 308–glycine 311, glycine 335–glycine 338, glycine 350–glycine 353, glycine 381–glycine 384, glycine 399–glycine 402, glycine 435–glycine 438, and glycine 521–glycine 524. Over residues proline 565–threonine 584 the composition is skewed to polar residues. Positions proline 565–threonine 685 are disordered. 4 GLFG repeats span residues glycine 585–glycine 588, glycine 611–glycine 614, glycine 627–glycine 630, and glycine 646–glycine 649. The segment covering glycine 588 to serine 600 has biased composition (low complexity). The segment covering asparagine 603–glycine 644 has biased composition (polar residues). Residues alanine 653–serine 663 show a composition bias toward low complexity. The span at isoleucine 664–threonine 685 shows a compositional bias: polar residues. Position 724 is a phosphoserine (serine 724). The interval glutamine 785–lysine 814 is disordered. Basic and acidic residues predominate over residues asparagine 792–glutamate 802. Residues serine 822–phenylalanine 963 enclose the Peptidase S59 domain. The disordered stretch occupies residues glutamate 974–asparagine 1020. Serine 1051 bears the Phosphoserine mark. The segment at lysine 1082–valine 1104 is disordered. Residues serine 1094–valine 1104 show a composition bias toward low complexity.

This sequence belongs to the nucleoporin GLFG family. As to quaternary structure, interacts (via G-L-F-G repeats) with rpn15/dss1. Interacts with raf1. In terms of assembly, interacts with ned1. Nup189 is autocatalytically cleaved in nup98 and nup96.

It localises to the nucleus. It is found in the nuclear pore complex. Its function is as follows. Functions as a component of the nuclear pore complex (NPC). NPC components, collectively referred to as nucleoporins (NUPs), can play the role of both NPC structural components and of docking or interaction partners for transiently associated nuclear transport factors. Active directional transport is assured by both, a Phe-Gly (FG) repeat affinity gradient for these transport factors across the NPC and a transport cofactor concentration gradient across the nuclear envelope. Nup189 is autocatalytically cleaved in vivo in 2 polypeptides which assume different functions in the NPC. Nup98 as one of the FG repeat nucleoporins participates in karyopherin interactions and contains part of the autocatalytic cleavage activity. Nup96 as part of the NUP84 complex is involved in nuclear poly(A)+ RNA and tRNA export. The chain is Nucleoporin nup189 (nup189) from Schizosaccharomyces pombe (strain 972 / ATCC 24843) (Fission yeast).